Here is a 295-residue protein sequence, read N- to C-terminus: Ankyrin repeat and SOCS box protein 17 (295 aa).

The stretch at 146 to 176 is one ANK repeat; that stretch reads SGITPLFYVAQTRQSNIFKILLQYGILEREK. The SOCS box domain occupies 232-295; it reads LGRRPIISNW…RLQNYLNLEI (64 aa).

Belongs to the ankyrin SOCS box (ASB) family.

It participates in protein modification; protein ubiquitination. Its function is as follows. May be a substrate-recognition component of a SCF-like ECS (Elongin-Cullin-SOCS-box protein) E3 ubiquitin-protein ligase complex which mediates the ubiquitination and subsequent proteasomal degradation of target proteins. The polypeptide is Ankyrin repeat and SOCS box protein 17 (ASB17) (Macaca fascicularis (Crab-eating macaque)).